The chain runs to 442 residues: Capsid vertex component 1 (442 aa).

The protein belongs to the herpesviridae CVC1 protein family. In terms of assembly, interacts (via C-terminus) with capsid vertex component 2/CVC2.

The protein resides in the virion. It localises to the host nucleus. In terms of biological role, capsid vertex-specific component that plays a role during viral DNA encapsidation, assuring correct genome cleavage and presumably stabilizing capsids that contain full-length viral genomes. In Human herpesvirus 6A (strain Uganda-1102) (HHV-6 variant A), this protein is Capsid vertex component 1.